The chain runs to 385 residues: Carbamoyl phosphate synthase small chain (385 aa).

Residues Met1–Gln185 are CPSase. 3 residues coordinate L-glutamine: Ser47, Gly237, and Gly239. One can recognise a Glutamine amidotransferase type-1 domain in the interval Asn189–Ser376. Catalysis depends on Cys265, which acts as the Nucleophile. Positions 266, 269, 307, 309, and 310 each coordinate L-glutamine. Catalysis depends on residues His349 and Glu351.

Belongs to the CarA family. Composed of two chains; the small (or glutamine) chain promotes the hydrolysis of glutamine to ammonia, which is used by the large (or ammonia) chain to synthesize carbamoyl phosphate. Tetramer of heterodimers (alpha,beta)4.

The catalysed reaction is hydrogencarbonate + L-glutamine + 2 ATP + H2O = carbamoyl phosphate + L-glutamate + 2 ADP + phosphate + 2 H(+). The enzyme catalyses L-glutamine + H2O = L-glutamate + NH4(+). The protein operates within amino-acid biosynthesis; L-arginine biosynthesis; carbamoyl phosphate from bicarbonate: step 1/1. It participates in pyrimidine metabolism; UMP biosynthesis via de novo pathway; (S)-dihydroorotate from bicarbonate: step 1/3. Small subunit of the glutamine-dependent carbamoyl phosphate synthetase (CPSase). CPSase catalyzes the formation of carbamoyl phosphate from the ammonia moiety of glutamine, carbonate, and phosphate donated by ATP, constituting the first step of 2 biosynthetic pathways, one leading to arginine and/or urea and the other to pyrimidine nucleotides. The small subunit (glutamine amidotransferase) binds and cleaves glutamine to supply the large subunit with the substrate ammonia. The protein is Carbamoyl phosphate synthase small chain of Pasteurella multocida (strain Pm70).